We begin with the raw amino-acid sequence, 440 residues long: Tumor necrosis factor receptor superfamily member 10B (440 aa).

Disordered regions lie at residues 1–32 and 60–84; these read MEQR…RPGP and DLAP…CPPG. The first 55 residues, 1–55, serve as a signal peptide directing secretion; the sequence is MEQRGQNAPAASGARKRHGPGPREARGARPGPRVPKTLVLVVAAVLLLVSAESAL. Residues 56 to 210 lie on the Extracellular side of the membrane; the sequence is ITQQDLAPQQ…SPGTPASPCS (155 aa). TNFR-Cys repeat units follow at residues 57-94, 97-137, and 138-178; these read TQQD…GRDC, CKYG…NTVC, and QCEE…DIEC. A compositionally biased stretch (low complexity) spans 60-71; the sequence is DLAPQQRAAPQQ. 7 disulfide bridges follow: Cys81-Cys94, Cys97-Cys113, Cys116-Cys129, Cys119-Cys137, Cys139-Cys153, Cys156-Cys170, and Cys160-Cys178. One copy of the TAPE repeat lies at 192-206; the sequence is PAVEETVTSSPGTPA. The helical transmembrane segment at 211–231 threads the bilayer; that stretch reads LSGIIIGVTVAAVVLIVAVFV. Residues 232 to 440 are Cytoplasmic-facing; sequence CKSLLWKKVL…LEGNADSAMS (209 aa). The Death domain occupies 339–422; the sequence is RQCFDDFADL…LAKQKIEDHL (84 aa).

Monomer. Can interact with TRADD and RIPK1. Interacts with HCMV protein UL141; this interaction prevents TNFRSF10B cell surface expression. Two TNFRSF10B monomers interact with a UL141 homodimer. Three TNFRSF10B molecules interact with TNFSF10 homotrimer. In the absence of stimulation, interacts with BIRC2, DDX3X and GSK3B. The interaction with BIRC2 and DDX3X is further enhanced upon receptor stimulation and accompanied by DDX3X and BIRC2 cleavage. (Microbial infection) Glycosylated on Arg residue by S.typhimurium protein Ssek3. As to expression, widely expressed in adult and fetal tissues; very highly expressed in tumor cell lines such as HeLaS3, K-562, HL-60, SW480, A-549 and G-361; highly expressed in heart, peripheral blood lymphocytes, liver, pancreas, spleen, thymus, prostate, ovary, uterus, placenta, testis, esophagus, stomach and throughout the intestinal tract; not detectable in brain.

Its subcellular location is the membrane. In terms of biological role, receptor for the cytotoxic ligand TNFSF10/TRAIL. The adapter molecule FADD recruits caspase-8 to the activated receptor. The resulting death-inducing signaling complex (DISC) performs caspase-8 proteolytic activation which initiates the subsequent cascade of caspases (aspartate-specific cysteine proteases) mediating apoptosis. Promotes the activation of NF-kappa-B. Essential for ER stress-induced apoptosis. This Homo sapiens (Human) protein is Tumor necrosis factor receptor superfamily member 10B (TNFRSF10B).